A 226-amino-acid polypeptide reads, in one-letter code: PKHD-type hydroxylase Pfl01_0799 (226 aa).

A Fe2OG dioxygenase domain is found at 78–178 (KVFPPLLNCY…RYASFFWTQS (101 aa)). Fe cation contacts are provided by histidine 96, aspartate 98, and histidine 159. Arginine 169 is a binding site for 2-oxoglutarate.

It depends on Fe(2+) as a cofactor. Requires L-ascorbate as cofactor.

This chain is PKHD-type hydroxylase Pfl01_0799, found in Pseudomonas fluorescens (strain Pf0-1).